The chain runs to 514 residues: Alanine--glyoxylate aminotransferase 2, mitochondrial (514 aa).

Residues Met1 to Ser41 constitute a mitochondrion transit peptide. Residue Lys71 is modified to N6-acetyllysine; alternate. Lys71 carries the post-translational modification N6-succinyllysine; alternate. An N6-acetyllysine modification is found at Lys84. Lys262 is modified (N6-acetyllysine; alternate). The residue at position 262 (Lys262) is an N6-succinyllysine; alternate. Lys304 is modified (N6-succinyllysine). At Lys350 the chain carries N6-(pyridoxal phosphate)lysine. Lys417 and Lys420 each carry N6-acetyllysine; alternate. An N6-succinyllysine; alternate mark is found at Lys417 and Lys420.

The protein belongs to the class-III pyridoxal-phosphate-dependent aminotransferase family. As to quaternary structure, homotetramer. The cofactor is pyridoxal 5'-phosphate. Expressed in the convoluted tubule in the kidney and in the liver hepatocytes (at protein level).

The protein resides in the mitochondrion. The enzyme catalyses glyoxylate + L-alanine = glycine + pyruvate. It catalyses the reaction (R)-3-amino-2-methylpropanoate + pyruvate = 2-methyl-3-oxopropanoate + L-alanine. It carries out the reaction 3-oxopropanoate + L-alanine = beta-alanine + pyruvate. The catalysed reaction is 2-oxobutanoate + L-alanine = (2S)-2-aminobutanoate + pyruvate. The enzyme catalyses N(omega),N(omega)-dimethyl-L-arginine + pyruvate = 5-(3,3-dimethylguanidino)-2-oxopentanoate + L-alanine. It catalyses the reaction N(omega),N('omega)-dimethyl-L-arginine + pyruvate = 5-(3,3'-dimethylguanidino)-2-oxopentanoate + L-alanine. It carries out the reaction N(omega),N(omega)-dimethyl-L-arginine + glyoxylate = 5-(3,3-dimethylguanidino)-2-oxopentanoate + glycine. The catalysed reaction is N(omega),N('omega)-dimethyl-L-arginine + glyoxylate = 5-(3,3'-dimethylguanidino)-2-oxopentanoate + glycine. The enzyme catalyses N(omega)-methyl-L-arginine + pyruvate = 5-(3-methylguanidino)-2-oxopentanoate + L-alanine. It catalyses the reaction N(omega)-methyl-L-arginine + glyoxylate = 5-(3-methylguanidino)-2-oxopentanoate + glycine. It carries out the reaction L-ornithine + pyruvate = 5-amino-2-oxopentanoate + L-alanine. The catalysed reaction is L-ornithine + glyoxylate = 5-amino-2-oxopentanoate + glycine. The enzyme catalyses (2S)-2-aminobutanoate + glyoxylate = 2-oxobutanoate + glycine. It catalyses the reaction N(omega),N(omega)-dimethyl-L-arginine + oxaloacetate = 5-(3,3-dimethylguanidino)-2-oxopentanoate + L-aspartate. It carries out the reaction oxaloacetate + L-alanine = L-aspartate + pyruvate. The catalysed reaction is N(omega),N(omega)-dimethyl-L-arginine + 2-oxobutanoate = 5-(3,3-dimethylguanidino)-2-oxopentanoate + (2S)-2-aminobutanoate. The enzyme catalyses 2-oxopentanoate + N(omega),N(omega)-dimethyl-L-arginine = 5-(3,3-dimethylguanidino)-2-oxopentanoate + L-2-aminopentanoate. It catalyses the reaction 2-oxohexanoate + N(omega),N(omega)-dimethyl-L-arginine = L-2-aminohexanoate + 5-(3,3-dimethylguanidino)-2-oxopentanoate. Multifunctional aminotransferase with a broad substrate specificity. Catalyzes the conversion of glyoxylate to glycine using alanine as the amino donor. Catalyzes metabolism of not L- but the D-isomer of D-beta-aminoisobutyric acid to generate 2-methyl-3-oxopropanoate and alanine. Catalyzes the transfer of the amino group from beta-alanine to pyruvate to yield L-alanine and 3-oxopropanoate. Can metabolize NG-monomethyl-L-arginine (NMMA), asymmetric NG,NG-dimethyl-L-arginine (ADMA) and symmetric NG,N'G-dimethyl-L-arginine (SDMA). ADMA is a potent inhibitor of nitric-oxide (NO) synthase, and this activity provides mechanism through which the kidney regulates blood pressure. The chain is Alanine--glyoxylate aminotransferase 2, mitochondrial (AGXT2) from Homo sapiens (Human).